The sequence spans 397 residues: Succinate--CoA ligase [ADP-forming] subunit beta (397 aa).

Positions 9-254 constitute an ATP-grasp domain; that stretch reads KALLKGYGAP…ETEEDAKEIE (246 aa). Residues lysine 46, 53-55, glutamate 109, alanine 112, and glutamate 117 each bind ATP; that span reads GRG. Asparagine 209 and aspartate 223 together coordinate Mg(2+). Residues asparagine 274 and 331–333 contribute to the substrate site; that span reads GIM.

The protein belongs to the succinate/malate CoA ligase beta subunit family. Heterotetramer of two alpha and two beta subunits. It depends on Mg(2+) as a cofactor.

The catalysed reaction is succinate + ATP + CoA = succinyl-CoA + ADP + phosphate. It catalyses the reaction GTP + succinate + CoA = succinyl-CoA + GDP + phosphate. Its pathway is carbohydrate metabolism; tricarboxylic acid cycle; succinate from succinyl-CoA (ligase route): step 1/1. Succinyl-CoA synthetase functions in the citric acid cycle (TCA), coupling the hydrolysis of succinyl-CoA to the synthesis of either ATP or GTP and thus represents the only step of substrate-level phosphorylation in the TCA. The beta subunit provides nucleotide specificity of the enzyme and binds the substrate succinate, while the binding sites for coenzyme A and phosphate are found in the alpha subunit. This Agrobacterium fabrum (strain C58 / ATCC 33970) (Agrobacterium tumefaciens (strain C58)) protein is Succinate--CoA ligase [ADP-forming] subunit beta.